A 436-amino-acid polypeptide reads, in one-letter code: Divalent metal cation transporter MntH (436 aa).

Basic and acidic residues predominate over residues Met1–Ala22. Residues Met1–Thr31 are disordered. Transmembrane regions (helical) follow at residues Ile40–Phe60, Gly71–Leu91, Leu115–Phe135, Leu144–Leu164, Leu177–Ala197, Gly216–Leu236, Val264–Ala284, Leu304–Gly324, Leu354–Leu374, Ile375–Phe395, and Phe411–Trp431.

The protein belongs to the NRAMP family.

Its subcellular location is the cell membrane. In terms of biological role, h(+)-stimulated, divalent metal cation uptake system. The chain is Divalent metal cation transporter MntH from Deinococcus radiodurans (strain ATCC 13939 / DSM 20539 / JCM 16871 / CCUG 27074 / LMG 4051 / NBRC 15346 / NCIMB 9279 / VKM B-1422 / R1).